Consider the following 412-residue polypeptide: Argininosuccinate synthase (412 aa).

10–18 (AYSGGLDTS) is an ATP binding site. Tyr-89 serves as a coordination point for L-citrulline. Residue Gly-119 coordinates ATP. L-aspartate contacts are provided by Thr-121, Asn-125, and Asp-126. Position 125 (Asn-125) interacts with L-citrulline. 4 residues coordinate L-citrulline: Arg-129, Ser-177, Glu-261, and Tyr-273.

It belongs to the argininosuccinate synthase family. Type 1 subfamily. Homotetramer.

It localises to the cytoplasm. The enzyme catalyses L-citrulline + L-aspartate + ATP = 2-(N(omega)-L-arginino)succinate + AMP + diphosphate + H(+). It participates in amino-acid biosynthesis; L-arginine biosynthesis; L-arginine from L-ornithine and carbamoyl phosphate: step 2/3. The chain is Argininosuccinate synthase from Bifidobacterium longum (strain DJO10A).